We begin with the raw amino-acid sequence, 170 residues long: Acetyl-CoA decarbonylase/synthase complex subunit epsilon 1 (170 aa).

Belongs to the CdhB family. As to quaternary structure, heterotetramer of two alpha and two epsilon subunits. The ACDS complex is made up of alpha, epsilon, beta, gamma and delta subunits with a probable stoichiometry of (alpha(2)epsilon(2))(4)-beta(8)-(gamma(1)delta(1))(8).

It functions in the pathway one-carbon metabolism; methanogenesis from acetate. Part of a complex that catalyzes the reversible cleavage of acetyl-CoA, allowing growth on acetate as sole source of carbon and energy. The alpha-epsilon subcomponent functions as a carbon monoxide dehydrogenase. The precise role of the epsilon subunit is unclear; it may have a stabilizing role within the alpha(2)epsilon(2) component and/or be involved in electron transfer to FAD during a potential FAD-mediated CO oxidation. This Methanosarcina acetivorans (strain ATCC 35395 / DSM 2834 / JCM 12185 / C2A) protein is Acetyl-CoA decarbonylase/synthase complex subunit epsilon 1 (cdhB1).